The following is a 260-amino-acid chain: UPF0246 protein Mmwyl1_3597 (260 aa).

The protein belongs to the UPF0246 family.

The polypeptide is UPF0246 protein Mmwyl1_3597 (Marinomonas sp. (strain MWYL1)).